Consider the following 227-residue polypeptide: Ribose-5-phosphate isomerase A (227 aa).

Substrate is bound by residues 26–29 (TGST), 82–85 (DGAD), and 95–98 (KGGG). Glutamate 104 (proton acceptor) is an active-site residue. Lysine 122 serves as a coordination point for substrate.

This sequence belongs to the ribose 5-phosphate isomerase family. Homodimer.

The catalysed reaction is aldehydo-D-ribose 5-phosphate = D-ribulose 5-phosphate. Its pathway is carbohydrate degradation; pentose phosphate pathway; D-ribose 5-phosphate from D-ribulose 5-phosphate (non-oxidative stage): step 1/1. Catalyzes the reversible conversion of ribose-5-phosphate to ribulose 5-phosphate. The sequence is that of Ribose-5-phosphate isomerase A from Streptococcus pyogenes serotype M28 (strain MGAS6180).